Reading from the N-terminus, the 211-residue chain is Protein-lysine N-methyltransferase DDB_G0272708 (211 aa).

This sequence belongs to the class I-like SAM-binding methyltransferase superfamily. EFM5 family.

The protein localises to the cytoplasm. S-adenosyl-L-methionine-dependent protein-lysine N-methyltransferase that methylates elongation factor 1-alpha. The chain is Protein-lysine N-methyltransferase DDB_G0272708 from Dictyostelium discoideum (Social amoeba).